The following is a 298-amino-acid chain: Ankyrin repeat domain-containing protein 29 (298 aa).

ANK repeat units follow at residues 8–38 (PLANAVFWAARKGNLALLQLLLNSGRVDVDC), 42–71 (YGTTALMVASYSGHYECVRELIMQGADINL), 75–104 (TGSTALFFASQQGHNEIVKLLFEFGASTEF), 108–137 (DGGTALCAACQFGHSRVVDTLLKNGANVHD), 141–170 (DGATALFLASQEGHVNLIRQLLSSGAKVNQ), 174–203 (DGTAPLWMAAQMGHSEVVKVLLLRGADRDA), 207–236 (DGSTALFKAAHKGHCSVMEELLKFSPSLGI), and 239–268 (NGSTALHAAVMGGSLKAVDLLLKANADPAL).

In Danio rerio (Zebrafish), this protein is Ankyrin repeat domain-containing protein 29 (ankrd29).